Reading from the N-terminus, the 192-residue chain is Erythropoietin (192 aa).

The first 27 residues, 1 to 27, serve as a signal peptide directing secretion; sequence MGVHECPAWLWLLLSLVSLPLGLPVPG. Disulfide bonds link Cys-34–Cys-187 and Cys-56–Cys-60. The N-linked (GlcNAc...) asparagine glycan is linked to Asn-51. Asn-65 and Asn-110 each carry an N-linked (GlcNAc...) asparagine glycan. Ser-152 is a glycosylation site (O-linked (GalNAc...) serine).

This sequence belongs to the EPO/TPO family. As to expression, produced by kidney or liver of adult mammals and by liver of fetal or neonatal mammals.

Its subcellular location is the secreted. Its function is as follows. Hormone involved in the regulation of erythrocyte proliferation and differentiation and the maintenance of a physiological level of circulating erythrocyte mass. Binds to EPOR leading to EPOR dimerization and JAK2 activation thereby activating specific downstream effectors, including STAT1 and STAT3. In Macaca mulatta (Rhesus macaque), this protein is Erythropoietin (EPO).